Reading from the N-terminus, the 887-residue chain is Putative RNA-binding protein 15B (887 aa).

Residues 1 to 132 (MKRQSERDSS…EPAGPGSTAA (132 aa)) are disordered. Positions 10-20 (SPSGRGSSSSA) are enriched in low complexity. 2 stretches are compositionally biased toward basic and acidic residues: residues 22–34 (RPRE…EAGG) and 65–77 (GHRD…DANH). Gly residues predominate over residues 83-94 (RSSGAPGGGGRT). Over residues 95 to 110 (GKASGDPGAGGASPRA) the composition is skewed to low complexity. Residues Ser-107 and Ser-111 each carry the phosphoserine modification. The span at 111–122 (SPLPPPPPPPGA) shows a compositional bias: pro residues. Residues 123 to 132 (EPAGPGSTAA) show a composition bias toward low complexity. One can recognise an RRM 1 domain in the interval 136–216 (KTLLISSLSP…RPLKVEPVYL (81 aa)). Residue Lys-210 forms a Glycyl lysine isopeptide (Lys-Gly) (interchain with G-Cter in SUMO2) linkage. The disordered stretch occupies residues 215 to 249 (YLRGGGSSRRSSSSSAAASTPPPGPPAPADPLGYL). Residues 222 to 233 (SRRSSSSSAAAS) are compositionally biased toward low complexity. The span at 234–243 (TPPPGPPAPA) shows a compositional bias: pro residues. 2 positions are modified to phosphoserine: Ser-261 and Ser-263. 2 RRM domains span residues 333 to 410 (RNLF…YGKA) and 414 to 488 (TRLW…FAKA). Thr-529 is subject to Phosphothreonine. Ser-549, Ser-553, and Ser-559 each carry phosphoserine. The interval 549–703 (SLSKSSDRRN…TLEEPKHETK (155 aa)) is disordered. Composition is skewed to basic and acidic residues over residues 570-613 (RSGE…ERSR), 623-643 (RGSD…EGTK), and 668-700 (EAPD…EPKH). Positions 590-594 (RRKRR) match the Nuclear localization signal motif. Residue Lys-699 forms a Glycyl lysine isopeptide (Lys-Gly) (interchain with G-Cter in SUMO2) linkage. The region spanning 708–886 (LSEYAQTLQL…HMVIVIVRDT (179 aa)) is the SPOC domain. The interaction with Epstein-Barr virus BMLF1 stretch occupies residues 719–887 (WNGLLVLKNS…MVIVIVRDTA (169 aa)).

It belongs to the RRM Spen family. As to quaternary structure, component of the WMM complex, a N6-methyltransferase complex composed of a catalytic subcomplex, named MAC, and of an associated subcomplex, named MACOM. The MAC subcomplex is composed of METTL3 and METTL14. The MACOM subcomplex is composed of WTAP, ZC3H13, CBLL1/HAKAI, VIRMA, and, in some cases of RBM15 (RBM15 or RBM15B). May interact with NCOR2. Interacts with NXF1, the interaction is required to promote mRNA export.

The protein resides in the nucleus. The protein localises to the nucleoplasm. It is found in the nucleus speckle. It localises to the nucleus envelope. RNA-binding protein that acts as a key regulator of N6-methyladenosine (m6A) methylation of RNAs, thereby regulating different processes, such as alternative splicing of mRNAs and X chromosome inactivation mediated by Xist RNA. Associated component of the WMM complex, a complex that mediates N6-methyladenosine (m6A) methylation of RNAs, a modification that plays a role in the efficiency of mRNA splicing and RNA processing. Plays a key role in m6A methylation, possibly by binding target RNAs and recruiting the WMM complex. Involved in random X inactivation mediated by Xist RNA: acts by binding Xist RNA and recruiting the WMM complex, which mediates m6A methylation, leading to target YTHDC1 reader on Xist RNA and promoting transcription repression activity of Xist. Functions in the regulation of alternative or illicit splicing, possibly by regulating m6A methylation. Inhibits pre-mRNA splicing. Also functions as a mRNA export factor by acting as a cofactor for the nuclear export receptor NXF1. This Mus musculus (Mouse) protein is Putative RNA-binding protein 15B (Rbm15b).